A 346-amino-acid polypeptide reads, in one-letter code: N-acetyl-gamma-glutamyl-phosphate reductase (346 aa).

Cys150 is a catalytic residue.

Belongs to the NAGSA dehydrogenase family. Type 1 subfamily.

The protein resides in the cytoplasm. It carries out the reaction N-acetyl-L-glutamate 5-semialdehyde + phosphate + NADP(+) = N-acetyl-L-glutamyl 5-phosphate + NADPH + H(+). It participates in amino-acid biosynthesis; L-arginine biosynthesis; N(2)-acetyl-L-ornithine from L-glutamate: step 3/4. Functionally, catalyzes the NADPH-dependent reduction of N-acetyl-5-glutamyl phosphate to yield N-acetyl-L-glutamate 5-semialdehyde. In Desulforamulus reducens (strain ATCC BAA-1160 / DSM 100696 / MI-1) (Desulfotomaculum reducens), this protein is N-acetyl-gamma-glutamyl-phosphate reductase.